Here is a 3084-residue protein sequence, read N- to C-terminus: Protein prune homolog 2 (3084 aa).

Position 1 is an N-acetylmethionine (Met1). Residues 109-111 (GSH) carry the DHH motif motif. 18 disordered regions span residues 394–417 (QPSS…QADG), 430–465 (TIRS…PGFD), 500–536 (ASEQ…PKGL), 672–733 (EQES…QKEE), 811–837 (KNTW…MGQS), 861–907 (EIWG…KATG), 947–1080 (SASN…DDPS), 1224–1316 (NMPS…GQSE), 1338–1395 (SGVN…LEVE), 1502–1543 (MNST…DLHD), 1600–1652 (GFGK…TTKR), 1776–1799 (ETGT…DPDK), 1836–1886 (GELE…GDKS), 1961–1980 (DENG…QENQ), 2071–2196 (ILTH…NPEV), 2410–2782 (MLLS…SHPR), 2797–2816 (QSEG…EIDI), and 2825–2859 (DEAD…AEEE). Polar residues predominate over residues 501–511 (SEQSQPSSHSA). 2 stretches are compositionally biased toward basic and acidic residues: residues 682–696 (PWKD…RRTS) and 723–733 (GNKEAQDQKEE). 2 stretches are compositionally biased toward polar residues: residues 811 to 828 (KNTW…SGQE) and 865 to 891 (KNNS…NNSK). The span at 962–975 (TNYSTSDSYTSPTY) shows a compositional bias: low complexity. Positions 977–999 (GDEKEIANKPVDKDNGFEAKDAE) are enriched in basic and acidic residues. The segment covering 1009–1019 (ATSSQQSQRNR) has biased composition (polar residues). Over residues 1034–1063 (HTEDKPEGNDAHHPDSDALKTEHAEDKNAS) the composition is skewed to basic and acidic residues. The segment covering 1071–1080 (SSPSSYDDPS) has biased composition (low complexity). The segment covering 1248-1261 (SPRHSNGKDSHMLE) has biased composition (basic and acidic residues). Polar residues predominate over residues 1265–1294 (LSESGGLTSQPVNQDTWGDSQGDTASSVTG). Basic and acidic residues predominate over residues 1350–1366 (KPRDQEFSSSDAFEHQD). The segment covering 1368–1378 (SSASGKISSLS) has biased composition (low complexity). Polar residues-rich tracts occupy residues 1779-1792 (TMDT…STEA), 1854-1869 (PIQN…STNP), and 1965-1980 (CVST…QENQ). A compositionally biased stretch (basic and acidic residues) spans 2089–2103 (VCHDSEGEQKMEKHT). The span at 2162–2174 (SSKPASSRSSPEP) shows a compositional bias: low complexity. 3 stretches are compositionally biased toward basic and acidic residues: residues 2416-2428 (PDHR…ETNI), 2506-2525 (KQTE…EDHQ), and 2535-2553 (SHEK…RENI). Residues 2569–2584 (PETQLSGTPDTCQSEF) are compositionally biased toward polar residues. Over residues 2595–2606 (RMSSSSNHESAS) the composition is skewed to low complexity. Polar residues predominate over residues 2607–2617 (LENPAQDQSWM). Over residues 2653 to 2664 (KGPKSQVLERNK) the composition is skewed to basic and acidic residues. A compositionally biased stretch (acidic residues) spans 2806-2816 (DNLDSPDEIDI). Polar residues predominate over residues 2840-2849 (ANKSSGQESE). The 162-residue stretch at 2879-3040 (DMKVIEPYRR…SIIKYDEEKS (162 aa)) folds into the CRAL-TRIO domain.

This sequence belongs to the PPase class C family. Prune subfamily.

Its subcellular location is the cytoplasm. May play an important role in regulating differentiation, survival and aggressiveness of the tumor cells. The polypeptide is Protein prune homolog 2 (Prune2) (Mus musculus (Mouse)).